The chain runs to 127 residues: uncharacterized protein (127 aa).

The 46-residue stretch at Met-1–Thr-46 folds into the HTH asnC-type domain.

In terms of biological role, not known, symbiotically active. This is an uncharacterized protein from Sinorhizobium fredii (strain NBRC 101917 / NGR234).